The following is a 578-amino-acid chain: Protein SIA1 (578 aa).

An N-terminal signal peptide occupies residues 1–28; it reads MFRNRRILLYARRFFLVWICFLFITSWS.

May be involved in the activation of the plasma membrane proton-ATPase by glucose. This is Protein SIA1 (SIA1) from Kluyveromyces lactis (strain ATCC 8585 / CBS 2359 / DSM 70799 / NBRC 1267 / NRRL Y-1140 / WM37) (Yeast).